We begin with the raw amino-acid sequence, 364 residues long: MSLQSIKYSRGSLDILDQLLLPVQSKYVAVRGVEDGWKVINKMQVRGAPAIAIVGCLSLAVEIYPEEFESKKRLRQEVEGKLNYLVSARPTAVNMKIAADELLALANDLTKDETIDVAGMKERFLNATEAMLEKDIADNQAIGSHGAQAILKRVAEAAGAQTGTAGPVRVLTHCNTGSLATAGYGTALGVVRQLAELGKLEHVYCTETRPYNQGARLTAYELVHEKFPATLVLDSMVAALLRAKNVAGVVVGADRVAANGDTANKIGTYQIAVVAKHHGVPFYVAAPLTSIDLAIPGGDHIIIEERPDREMTHVGEHRIAAPGINCWNPAFDVTPASLITGIITERGVFKPEELKEAITKLLES.

The active-site Proton donor is aspartate 254.

Belongs to the eIF-2B alpha/beta/delta subunits family. MtnA subfamily.

The protein resides in the cytoplasm. It is found in the nucleus. The catalysed reaction is 5-(methylsulfanyl)-alpha-D-ribose 1-phosphate = 5-(methylsulfanyl)-D-ribulose 1-phosphate. Its pathway is amino-acid biosynthesis; L-methionine biosynthesis via salvage pathway; L-methionine from S-methyl-5-thio-alpha-D-ribose 1-phosphate: step 1/6. Functionally, catalyzes the interconversion of methylthioribose-1-phosphate (MTR-1-P) into methylthioribulose-1-phosphate (MTRu-1-P). This Drosophila ananassae (Fruit fly) protein is Methylthioribose-1-phosphate isomerase.